Here is a 221-residue protein sequence, read N- to C-terminus: GDP-perosamine N-acetyltransferase (221 aa).

Histidine 139 functions as the Proton acceptor in the catalytic mechanism.

Belongs to the transferase hexapeptide repeat family. As to quaternary structure, homotrimer.

It carries out the reaction GDP-alpha-D-perosamine + acetyl-CoA = GDP-N-acetyl-alpha-D-perosamine + CoA + H(+). Its pathway is bacterial outer membrane biogenesis; LPS O-antigen biosynthesis. Functionally, catalyzes the transfer of an acetyl residue from acetyl-CoA onto GDP-perosamine to form GDP-N-acetyl-perosamine. This chain is GDP-perosamine N-acetyltransferase, found in Escherichia coli O157:H7.